The following is a 179-amino-acid chain: tRNA-splicing endonuclease (179 aa).

Catalysis depends on residues Tyr115, His125, and Lys156.

Belongs to the tRNA-intron endonuclease family. Archaeal short subfamily. In terms of assembly, homotetramer; although the tetramer contains four active sites, only two participate in the cleavage. Therefore, it should be considered as a dimer of dimers.

The catalysed reaction is pretRNA = a 3'-half-tRNA molecule with a 5'-OH end + a 5'-half-tRNA molecule with a 2',3'-cyclic phosphate end + an intron with a 2',3'-cyclic phosphate and a 5'-hydroxyl terminus.. Its function is as follows. Endonuclease that removes tRNA introns. Cleaves pre-tRNA at the 5'- and 3'-splice sites to release the intron. The products are an intron and two tRNA half-molecules bearing 2',3' cyclic phosphate and 5'-OH termini. Recognizes a pseudosymmetric substrate in which 2 bulged loops of 3 bases are separated by a stem of 4 bp. The chain is tRNA-splicing endonuclease (endA) from Methanocaldococcus jannaschii (strain ATCC 43067 / DSM 2661 / JAL-1 / JCM 10045 / NBRC 100440) (Methanococcus jannaschii).